The sequence spans 577 residues: MNLFDVADFYINKIVTSQSKLSVANVNEHQRIKVLLLDKNTTPTISLCATQSELLKHEIYLVERIENEQREVSRHLRCLVYVKPTEETLQHLLRELRNPRYGEYQIFFSNIVSKSQLERLAESDDLEAVTKVEEIFQDFFILNQDLFSFDLQPREFLSNKLVWSEGGLTKCTNSLVSVLLSLKIKPDIRYEGASKICERLAKEVSYEIGKNERTFFDFPVMDSTPVLLILDRNTDPITPLLQPWTYQSMINEYIGIKRNIVDLSKVPRIDKDLEKVTLSSKQDAFFRDTMYLNFGELGDKVKQYVTTYKDKTQTNSQINSIEDIKNFIEKYPEFRKLSGNVAKHMAIVGELDRQLKIKNIWEISEIEQNLSAHDANEEDFSDLIKLLQNEAVDKYYKLKLACIYSLNNQTSSDKIRQLVEILSQQLPPEDVNFFHKFKSLFSRQDKMTQSNHDKDDILTELARRFNSRMNSKSNTAENVYMQHIPEISSLLTDLSKNALFRDRFKEIDTQGHRVIGNQQSKDIPQDVILFVIGGVTYEEARLVHDFNGTMNNRMRVVLGGTSILSTKEYMDSIRSAK.

The protein belongs to the STXBP/unc-18/SEC1 family. In terms of assembly, interacts with PEP7 and TLG2.

It localises to the cytoplasm. The protein resides in the vacuole membrane. Functionally, essential for vacuolar protein sorting. Function in membrane traffic between the Golgi and the vacuole. This chain is Vacuolar protein sorting-associated protein 45 (VPS45), found in Saccharomyces cerevisiae (strain ATCC 204508 / S288c) (Baker's yeast).